The primary structure comprises 261 residues: MTIQSLIVTIGSGGLVGFALGLLGGGGSILATPLLLYVVGVTNPHIAIGTSAVAVSANAYANLIAHAWKGHVWWRSAVIFALVGTLGAFLGSSIGMLIDGQRLLLLFGLLMAMVGLLMLRGRATAPHAEQHQTVLRMCMKTSAVAILTGAASGFFGIGGGFLIVPALIFATRMPTINAIGSSLLAVGTFGLITTLNYARHDLVDWTIAMEFIVGGITGGGLGTLLATRFSASKHLLNRVFGLIVIAVAIYVIWRSWASLVA.

Transmembrane regions (helical) follow at residues 6–26 (LIVT…LGGG), 29–49 (ILAT…IAIG), 78–98 (VIFA…GMLI), 99–119 (DGQR…LLML), 150–170 (AASG…LIFA), 175–195 (TINA…ITTL), 205–225 (WTIA…GTLL), and 239–259 (VFGL…WASL).

It belongs to the 4-toluene sulfonate uptake permease (TSUP) (TC 2.A.102) family.

The protein localises to the cell membrane. The protein is Probable membrane transporter protein XF_0764 of Xylella fastidiosa (strain 9a5c).